The following is a 76-amino-acid chain: Kappa-actitoxin-Avd4o (76 aa).

A signal peptide spans 1-19; it reads MNKALFLSLVVLCAAVVFA. Positions 20 to 33 are excised as a propeptide; that stretch reads AEDLQKAKHAPFKL. 3 disulfide bridges follow: C37–C72, C39–C65, and C55–C73.

This sequence belongs to the sea anemone type 3 (BDS) potassium channel toxin family. As to expression, experimental results show no expression in the ectodermal tissue from the distal and proximal tentacles, body wall, and oral disk. Since paralogs are expressed in this tissue, an expression of this toxin in this tissue is probable. The negative results could be explained by the very low abundance of EST sequences.

Its subcellular location is the secreted. The protein localises to the nematocyst. Its function is as follows. Blocks Kv3 voltage-gated potassium channels. Reduces blood pressure. The polypeptide is Kappa-actitoxin-Avd4o (Anemonia viridis (Snakelocks anemone)).